The chain runs to 888 residues: Autotaxin (888 aa).

The signal sequence occupies residues 1 to 27; it reads MARRRSCQLHQVISLFTFAVGVNICLG. The propeptide at 28-35 is removed by furin; it reads VTANRIKR. Asn54 carries an N-linked (GlcNAc...) asparagine glycan. 2 SMB domains span residues 55 to 98 and 99 to 143; these read ISGS…LKTA and GGWE…GESH. Intrachain disulfides connect Cys59/Cys76, Cys63/Cys94, Cys74/Cys87, Cys80/Cys86, Cys103/Cys120, Cys108/Cys138, Cys118/Cys131, Cys124/Cys130, Cys149/Cys195, and Cys157/Cys351. The Cell attachment site motif lies at 127–129; sequence RGD. The phosphodiesterase stretch occupies residues 145–502; the sequence is VDDDCEEIKT…PTFKYKTKVP (358 aa). Zn(2+) contacts are provided by Asp172 and Thr210. Catalysis depends on Thr210, which acts as the Nucleophile. 1-(9Z-octadecenoyl)-sn-glycero-3-phosphate is bound by residues Thr210, Asn231, and Asp312. Residues Thr210, Asn231, and Asp312 each contribute to the 1-hexadecanoyl-sn-glycero-3-phosphate site. 1-tetradecanoyl-sn-glycerol 3-phosphate-binding residues include Thr210, Asn231, and Asp312. Zn(2+) contacts are provided by Asp312, His316, Asp359, and His360. 5 disulfides stabilise this stretch: Cys367-Cys469, Cys414-Cys831, Cys567-Cys692, Cys569-Cys677, and Cys800-Cys810. A glycan (N-linked (GlcNAc...) asparagine) is linked at Asn411. His475 provides a ligand contact to Zn(2+). Residue His475 participates in 1-(9Z-octadecenoyl)-sn-glycero-3-phosphate binding. His475 provides a ligand contact to 1-hexadecanoyl-sn-glycero-3-phosphate. His475 provides a ligand contact to 1-tetradecanoyl-sn-glycerol 3-phosphate. The N-linked (GlcNAc...) asparagine glycan is linked to Asn525. Residues 623-888 are nuclease-like domain; it reads LYGRPAVLYR…TYLQTYESEI (266 aa). Ca(2+) is bound by residues Asp765, Asp767, Asp769, Leu771, and Asp773. Asn832 carries an N-linked (GlcNAc...) asparagine glycan. The required for secretion stretch occupies residues 855–876; that stretch reads IEHLTSLDFFRKTSRSYPEILT.

Belongs to the nucleotide pyrophosphatase/phosphodiesterase family. Zn(2+) serves as cofactor. Ca(2+) is required as a cofactor. N-glycosylation, but not furin-cleavage, plays a critical role on secretion and on lysoPLD activity. Post-translationally, the interdomain disulfide bond between Cys-414 and Cys-831 is essential for catalytic activity. In terms of tissue distribution, detected in fetal serum (at protein level).

The protein resides in the secreted. The enzyme catalyses a 1-O-alkyl-sn-glycero-3-phosphoethanolamine + H2O = a 1-O-alkyl-sn-glycero-3-phosphate + ethanolamine + H(+). It catalyses the reaction a 1-acyl-sn-glycero-3-phosphoethanolamine + H2O = a 1-acyl-sn-glycero-3-phosphate + ethanolamine + H(+). It carries out the reaction 1-(9Z-octadecenoyl)-sn-glycero-3-phosphoethanolamine + H2O = 1-(9Z-octadecenoyl)-sn-glycero-3-phosphate + ethanolamine + H(+). The catalysed reaction is a 1-O-alkyl-sn-glycero-3-phosphocholine + H2O = a 1-O-alkyl-sn-glycero-3-phosphate + choline + H(+). The enzyme catalyses 1-O-(9Z-octadecenyl)-sn-glycero-3-phosphocholine + H2O = 1-O-(9Z-octadecenyl)-sn-glycero-3-phosphate + choline + H(+). It catalyses the reaction 1-O-hexadecyl-sn-glycero-3-phosphocholine + H2O = 1-O-hexadecyl-sn-glycero-3-phosphate + choline + H(+). It carries out the reaction a 1-O-(1Z-alkenyl)-sn-glycero-3-phosphocholine + H2O = a 1-O-(1Z-alkenyl)-sn-glycero-3-phosphate + choline + H(+). The catalysed reaction is a 1-acyl-sn-glycero-3-phosphocholine + H2O = a 1-acyl-sn-glycero-3-phosphate + choline + H(+). The enzyme catalyses 1-dodecanoyl-sn-glycero-3-phosphocholine + H2O = 1-dodecanoyl-sn-glycerol 3-phosphate + choline + H(+). It catalyses the reaction 1-(9Z-octadecenoyl)-sn-glycero-3-phosphocholine + H2O = 1-(9Z-octadecenoyl)-sn-glycero-3-phosphate + choline + H(+). It carries out the reaction 1-tetradecanoyl-sn-glycero-3-phosphocholine + H2O = 1-tetradecanoyl-sn-glycerol 3-phosphate + choline + H(+). The catalysed reaction is 1-decanoyl-sn-glycero-3-phosphocholine + H2O = 1-decanoyl-sn-glycero-3-phosphate + choline + H(+). The enzyme catalyses 1-octadecanoyl-sn-glycero-3-phosphocholine + H2O = 1-octadecanoyl-sn-glycero-3-phosphate + choline + H(+). It catalyses the reaction 1-hexadecanoyl-sn-glycero-3-phosphocholine + H2O = 1-hexadecanoyl-sn-glycero-3-phosphate + choline + H(+). It carries out the reaction 1-hexanoyl-sn-glycero-3-phosphocholine + H2O = 1-hexanoyl-sn-glycero-3-phosphate + choline + H(+). The catalysed reaction is 1-(9Z,12Z)-octadecadienoyl-sn-glycero-3-phosphocholine + H2O = 1-(9Z,12Z)-octadecadienoyl-sn-glycero-3-phosphate + choline + H(+). The enzyme catalyses sphing-4-enine-phosphocholine + H2O = sphing-4-enine 1-phosphate + choline + H(+). It catalyses the reaction 1-(5Z,8Z,11Z,14Z-eicosatetraenoyl)-sn-glycero-3-phosphocholine + H2O = 1-(5Z,8Z,11Z,14Z-eicosatetraenoyl)-sn-glycero-3-phosphate + choline + H(+). It carries out the reaction a 2-acyl-sn-glycero-3-phosphocholine + H2O = a 2-acyl-sn-glycerol 3-phosphate + choline + H(+). The catalysed reaction is a 1,2-diacyl-sn-glycero-3-phosphocholine + H2O = a 1,2-diacyl-sn-glycero-3-phosphate + choline + H(+). The enzyme catalyses 1,2-dioctanoyl-sn-glycero-3-phosphocholine + H2O = 1,2-dioctanoyl-sn-glycero-3-phosphate + choline + H(+). It catalyses the reaction 1,2-didecanoyl-sn-glycero-3-phosphocholine + H2O = 1,2-didecanoyl-sn-glycero-3-phosphate + choline + H(+). It carries out the reaction a 1-acyl-sn-glycero-3-phospho-L-serine + H2O = a 1-acyl-sn-glycero-3-phosphate + L-serine + H(+). The catalysed reaction is 1-(9Z-octadecenoyl)-sn-glycero-3-phospho-L-serine + H2O = 1-(9Z-octadecenoyl)-sn-glycero-3-phosphate + L-serine + H(+). The enzyme catalyses a 2-acyl-sn-glycero-3-phospho-L-serine + H2O = a 2-acyl-sn-glycerol 3-phosphate + L-serine + H(+). Secreted lysophospholipase D that hydrolyzes lysophospholipids to produce the signaling molecule lysophosphatidic acid (LPA) in extracellular fluids. Its major substrate is lysophosphatidylcholine. Can also act on sphingosylphosphorylcholine producing sphingosine-1-phosphate, a modulator of cell motility. Can hydrolyze, in vitro, bis-pNPP, to some extent pNP-TMP, and barely ATP. Involved in several motility-related processes such as angiogenesis and neurite outgrowth. Acts as an angiogenic factor by stimulating migration of smooth muscle cells and microtubule formation. Stimulates migration of melanoma cells, probably via a pertussis toxin-sensitive G protein. May have a role in induction of parturition. Possible involvement in cell proliferation and adipose tissue development. Required for LPA production in activated platelets, cleaves the sn-1 lysophospholipids to generate sn-1 lysophosphatidic acids containing predominantly 18:2 and 20:4 fatty acids. Shows a preference for the sn-1 to the sn-2 isomer of 1-O-alkyl-sn-glycero-3-phosphocholine (lyso-PAF). This is Autotaxin from Bos taurus (Bovine).